Reading from the N-terminus, the 384-residue chain is Cysteine protease ATG4B (384 aa).

Cys-74 functions as the Nucleophile in the catalytic mechanism. Residues Asp-269 and His-271 contribute to the active site. The LIR signature appears at 379-382 (FEIL).

Belongs to the peptidase C54 family.

The protein resides in the cytoplasm. It localises to the cytosol. The protein localises to the cytoplasmic vesicle. It is found in the autophagosome. Its subcellular location is the endoplasmic reticulum. The protein resides in the mitochondrion. The enzyme catalyses [protein]-C-terminal L-amino acid-glycyl-phosphatidylethanolamide + H2O = [protein]-C-terminal L-amino acid-glycine + a 1,2-diacyl-sn-glycero-3-phosphoethanolamine. The catalysed reaction is [protein]-C-terminal L-amino acid-glycyl-phosphatidylserine + H2O = [protein]-C-terminal L-amino acid-glycine + a 1,2-diacyl-sn-glycero-3-phospho-L-serine. Cysteine protease that plays a key role in autophagy by mediating both proteolytic activation and delipidation of ATG8 family proteins. Required for canonical autophagy (macroautophagy), non-canonical autophagy as well as for mitophagy. The protease activity is required for proteolytic activation of ATG8 family proteins: cleaves the C-terminal amino acid of ATG8 proteins to reveal a C-terminal glycine. Exposure of the glycine at the C-terminus is essential for ATG8 proteins conjugation to phosphatidylethanolamine (PE) and insertion to membranes, which is necessary for autophagy. Protease activity is also required to counteract formation of high-molecular weight conjugates of ATG8 proteins (ATG8ylation): acts as a deubiquitinating-like enzyme that removes ATG8 conjugated to other proteins, such as ATG3. In addition to the protease activity, also mediates delipidation of ATG8 family proteins. Catalyzes delipidation of PE-conjugated forms of ATG8 proteins during macroautophagy. Also involved in non-canonical autophagy, a parallel pathway involving conjugation of ATG8 proteins to single membranes at endolysosomal compartments, by catalyzing delipidation of ATG8 proteins conjugated to phosphatidylserine (PS). The protein is Cysteine protease ATG4B of Xenopus laevis (African clawed frog).